A 518-amino-acid polypeptide reads, in one-letter code: Wax ester synthase/diacylglycerol acyltransferase 6 (518 aa).

Positions 1-17 (MEIKTRRDTSETSVRKD) are enriched in basic and acidic residues. Positions 1-29 (MEIKTRRDTSETSVRKDDEEEVEEEQPLS) are disordered. The Cytoplasmic portion of the chain corresponds to 1 to 213 (MEIKTRRDTS…LMAGSRGDSR (213 aa)). His163 functions as the Proton acceptor in the catalytic mechanism. Residues 185 to 205 (PDELPSLPNQNRSSSRSSRLM) form a disordered region. A helical transmembrane segment spans residues 214-234 (FLWLVMVIWSAIMLVLNTVCD). The Lumenal segment spans residues 235-518 (ALEFIATTMF…VQERDSRSLD (284 aa)). N-linked (GlcNAc...) asparagine glycosylation occurs at Asn430.

In the N-terminal section; belongs to the long-chain O-acyltransferase family. As to expression, expressed in roots, stems, leaves, flowers and siliques.

It is found in the cell membrane. The protein resides in the endoplasmic reticulum membrane. Its subcellular location is the golgi apparatus membrane. The catalysed reaction is an acyl-CoA + a 1,2-diacyl-sn-glycerol = a triacyl-sn-glycerol + CoA. The enzyme catalyses a long chain fatty alcohol + a fatty acyl-CoA = a wax ester + CoA. It functions in the pathway glycerolipid metabolism; triacylglycerol biosynthesis. Its pathway is lipid metabolism. Functionally, bifunctional wax ester synthase/diacylglycerol acyltransferase that uses acyl-CoAs with 16, 18 and 20 carbons as substrates, preferably in combination with 16:0ol alcohol. Involved in cuticular wax biosynthesis. The protein is Wax ester synthase/diacylglycerol acyltransferase 6 of Arabidopsis thaliana (Mouse-ear cress).